The following is a 432-amino-acid chain: Adenylosuccinate synthetase (432 aa).

GTP-binding positions include 12–18 (GDEGKGK) and 40–42 (GHT). Asp13 acts as the Proton acceptor in catalysis. Positions 13 and 40 each coordinate Mg(2+). IMP contacts are provided by residues 13 to 16 (DEGK), 38 to 41 (NAGH), Thr132, Arg146, Gln226, Thr241, and Arg305. The Proton donor role is filled by His41. 301 to 307 (TVTGRKR) lines the substrate pocket. GTP is bound by residues Arg307, 333–335 (KLD), and 415–417 (STS).

This sequence belongs to the adenylosuccinate synthetase family. As to quaternary structure, homodimer. Requires Mg(2+) as cofactor.

The protein localises to the cytoplasm. The catalysed reaction is IMP + L-aspartate + GTP = N(6)-(1,2-dicarboxyethyl)-AMP + GDP + phosphate + 2 H(+). It participates in purine metabolism; AMP biosynthesis via de novo pathway; AMP from IMP: step 1/2. Plays an important role in the de novo pathway of purine nucleotide biosynthesis. Catalyzes the first committed step in the biosynthesis of AMP from IMP. The protein is Adenylosuccinate synthetase of Chelativorans sp. (strain BNC1).